Consider the following 247-residue polypeptide: Phycobilisome rod-core linker polypeptide CpcG2 (247 aa).

Positions 11 to 189 (SSQNQRVPGY…YWRDKLENER (179 aa)) constitute a PBS-linker domain.

It belongs to the phycobilisome linker protein family. The phycobilisome is a hemidiscoidal structure that is composed of two distinct substructures: a core complex and a number of rods radiating from the core.

It localises to the cellular thylakoid membrane. Rod-core linker protein required for attachment of phycocyanin to allophycocyanin in cores of phycobilisomes. Functionally, linker polypeptides determine the state of aggregation and the location of the disk-shaped phycobiliprotein units within the phycobilisome and modulate their spectroscopic properties in order to mediate a directed and optimal energy transfer. This chain is Phycobilisome rod-core linker polypeptide CpcG2 (cpcG2), found in Mastigocladus laminosus (Fischerella sp.).